We begin with the raw amino-acid sequence, 418 residues long: CCA-adding enzyme (418 aa).

ATP-binding residues include S54 and R57. CTP contacts are provided by S54 and R57. Residues D66, D68, and D118 each coordinate Mg(2+). Residues H141, K161, and Y170 each contribute to the ATP site. The CTP site is built by H141, K161, and Y170.

This sequence belongs to the tRNA nucleotidyltransferase/poly(A) polymerase family. Archaeal CCA-adding enzyme subfamily. In terms of assembly, homodimer. The cofactor is Mg(2+).

The enzyme catalyses a tRNA precursor + 2 CTP + ATP = a tRNA with a 3' CCA end + 3 diphosphate. It carries out the reaction a tRNA with a 3' CCA end + 2 CTP + ATP = a tRNA with a 3' CCACCA end + 3 diphosphate. In terms of biological role, catalyzes the addition and repair of the essential 3'-terminal CCA sequence in tRNAs without using a nucleic acid template. Adds these three nucleotides in the order of C, C, and A to the tRNA nucleotide-73, using CTP and ATP as substrates and producing inorganic pyrophosphate. tRNA 3'-terminal CCA addition is required both for tRNA processing and repair. Also involved in tRNA surveillance by mediating tandem CCA addition to generate a CCACCA at the 3' terminus of unstable tRNAs. While stable tRNAs receive only 3'-terminal CCA, unstable tRNAs are marked with CCACCA and rapidly degraded. The chain is CCA-adding enzyme from Pyrobaculum islandicum (strain DSM 4184 / JCM 9189 / GEO3).